A 415-amino-acid polypeptide reads, in one-letter code: MNNSKTNQQMNTSMGYPLTVYDECNKFQLIVPTLDANIMLWCIGQLSLLNDSNGCKHLFWQPNDKSNVRILLNNYDYGHLFKYLQCQRKCSVYIGEGTLKKYNLTISTSFDNFLDLTPSEEKESLCREDAHEDPVSPKAGSEEEISPNSTSNVVVSRECLDNFMKQLLKLEESLNKLELEQKVTNKEPNHRISGTIDIPEDRSELVNFFTELKTVKQLEDVFQRYHDYERLSQECDSKTEIASDHSKKETKIEVEPPNERSLQITMDQRDNSLYFQLFNNTNSVLAGNCKLKFTDAGDKPTTQIIDMGPHEIGIKEYKEYRYFPYALDLEAGSTIEIENQYGEVIFLGKYGSSPMINLRPPSRLSAESLQASQEPFYSFQIDTLPELDDSSIISTSISLSYDGDDNEKALTWEEL.

The segment at 21–28 (YDECNKFQ) is ATG11-binding. Basic and acidic residues predominate over residues 126–135 (CREDAHEDPV). The segment at 126–150 (CREDAHEDPVSPKAGSEEEISPNST) is disordered. Phosphoserine is present on residues S136 and S141. Residues 157–187 (RECLDNFMKQLLKLEESLNKLELEQKVTNKE) are a coiled coil. Glycyl lysine isopeptide (Lys-Gly) (interchain with G-Cter in ubiquitin) cross-links involve residues K213 and K216. S243 is subject to Phosphoserine. An AMS1-binding region spans residues 254-367 (VEPPNERSLQ…LRPPSRLSAE (114 aa)). The segment at 406 to 415 (NEKALTWEEL) is ATG8-binding. A WXXL motif is present at residues 412–415 (WEEL).

As to quaternary structure, interacts with the vacuolar aminopeptidase 1 (LAP4) precursor and mature forms. Also interacts with AMS1, APE4, ATG8 ATG11, and UBP3. Polyubiquitinated at Lys-213 and Lys-216. Deubiquitination by UBP3 is required for full activity of ATG19.

The protein localises to the preautophagosomal structure membrane. In terms of biological role, cargo-receptor protein involved in the cytoplasm to vacuole transport (Cvt) and in autophagy. Recognizes cargo proteins, such as APE4, LAP3, LAP4 and AMS1 and delivers them to the pre-autophagosomal structure for eventual engulfment by the autophagosome and targeting to the vacuole. Involved in the organization of the preautophagosomal structure (PAS). ATG19 association with cargo protein is required to localize ATG11 to the PAS. Also involved in endoplasmic reticulum-specific autophagic process, in selective removal of ER-associated degradation (ERAD) substrates, and is essential for the survival of cells subjected to severe ER stress. Also plays a role in regulation of filamentous growth. In Saccharomyces cerevisiae (strain YJM789) (Baker's yeast), this protein is Autophagy-related protein 19 (ATG19).